We begin with the raw amino-acid sequence, 218 residues long: MMRREDEEEEGTMMKAKGDLEMKEEEEISETGELVGPFVSAMPTPMPHNKGTRFSEAWEYFHLAPARAGHHPNQYATCRLCGRQVSRGPGVNVGTTALWKHLKSMHREELEKSGHGQAGQRQDPRPHGPQLPTGIEGNWGRLLEQVGTMALWASQREKEVLRRERAVEWRERAVEKRERALEEVERAILEMKWKVRAEKEACQREKELPAAVHPFHFV.

Positions 1-11 (MMRREDEEEEG) are enriched in acidic residues. The disordered stretch occupies residues 1–24 (MMRREDEEEEGTMMKAKGDLEMKE). A BED-type zinc finger spans residues 52–113 (TRFSEAWEYF…SMHREELEKS (62 aa)). C78, C81, H101, and H106 together coordinate Zn(2+). Residues 104 to 137 (SMHREELEKSGHGQAGQRQDPRPHGPQLPTGIEG) are disordered. The segment covering 105-114 (MHREELEKSG) has biased composition (basic and acidic residues).

In terms of tissue distribution, expressed in keratinocytes.

It is found in the nucleus. Functionally, transcriptional regulator which has intrinsic repressor activity and which competes with the transcriptional activator IRF1 for binding to the 5'-[CA]GAA[AC]C[CT]-3' consensus sequence in gene promoters. May thereby play a role in keratinocyte differentiation. This is Zinc finger BED domain-containing protein 2 (ZBED2) from Homo sapiens (Human).